Reading from the N-terminus, the 385-residue chain is Branched-chain-amino-acid aminotransferase, cytosolic (385 aa).

At Lys221 the chain carries N6-(pyridoxal phosphate)lysine.

The protein belongs to the class-IV pyridoxal-phosphate-dependent aminotransferase family. In terms of assembly, homodimer. Pyridoxal 5'-phosphate is required as a cofactor. As to expression, expressed in muscles.

It is found in the cytoplasm. It catalyses the reaction L-leucine + 2-oxoglutarate = 4-methyl-2-oxopentanoate + L-glutamate. The enzyme catalyses L-isoleucine + 2-oxoglutarate = (S)-3-methyl-2-oxopentanoate + L-glutamate. The catalysed reaction is L-valine + 2-oxoglutarate = 3-methyl-2-oxobutanoate + L-glutamate. Its function is as follows. Catalyzes the first reaction in the catabolism of the essential branched chain amino acids leucine, isoleucine, and valine. The sequence is that of Branched-chain-amino-acid aminotransferase, cytosolic (BCAT1) from Ovis aries (Sheep).